A 692-amino-acid chain; its full sequence is Protein artemis (692 aa).

The residue at position 380 (Thr380) is a Phosphothreonine. Position 385 is a phosphoserine (Ser385). 2 disordered regions span residues 503–555 (RLEN…DSQS) and 640–660 (STNADSQSSSDFEVPSTPEAE). Residues 507–520 (FPSSTEAGGSQSPK) show a composition bias toward polar residues. Over residues 530-543 (THISSQNSSQSTHI) the composition is skewed to low complexity. Polar residues-rich tracts occupy residues 544–555 (TEQGSQGWDSQS) and 640–650 (STNADSQSSSD). A Phosphoserine; by ATM modification is found at Ser645.

The protein belongs to the DNA repair metallo-beta-lactamase (DRMBL) family. As to quaternary structure, interacts with LIG4; the interaction is direct. Interacts with ATM. Interacts with BRCA1. Interacts with PRKDC. Interacts with TP53BP1. Also exhibits ATM- and phosphorylation-dependent interaction with the MRN complex, composed of MRE11, RAD50, and NBN. In terms of processing, phosphorylation on undefined residues by PRKDC may stimulate endonucleolytic activity on 5' and 3' hairpins and overhangs. PRKDC must remain present, even after phosphorylation, for efficient hairpin opening. Also phosphorylated by ATM in response to ionizing radiation (IR) and by ATR in response to ultraviolet (UV) radiation.

It localises to the nucleus. In terms of biological role, required for V(D)J recombination, the process by which exons encoding the antigen-binding domains of immunoglobulins and T-cell receptor proteins are assembled from individual V, (D), and J gene segments. V(D)J recombination is initiated by the lymphoid specific RAG endonuclease complex, which generates site specific DNA double strand breaks (DSBs). These DSBs present two types of DNA end structures: hairpin sealed coding ends and phosphorylated blunt signal ends. These ends are independently repaired by the non homologous end joining (NHEJ) pathway to form coding and signal joints respectively. This protein exhibits single-strand specific 5'-3' exonuclease activity in isolation, and acquires endonucleolytic activity on 5' and 3' hairpins and overhangs when in a complex with PRKDC. The latter activity is required specifically for the resolution of closed hairpins prior to the formation of the coding joint. May also be required for the repair of complex DSBs induced by ionizing radiation, which require substantial end-processing prior to religation by NHEJ. The sequence is that of Protein artemis (DCLRE1C) from Pongo abelii (Sumatran orangutan).